The primary structure comprises 203 residues: Outer-membrane lipoprotein carrier protein (203 aa).

Residues 1-20 (MRRGRVWLAALCLAAGAAHA) form the signal peptide.

The protein belongs to the LolA family. In terms of assembly, monomer.

Its subcellular location is the periplasm. In terms of biological role, participates in the translocation of lipoproteins from the inner membrane to the outer membrane. Only forms a complex with a lipoprotein if the residue after the N-terminal Cys is not an aspartate (The Asp acts as a targeting signal to indicate that the lipoprotein should stay in the inner membrane). The polypeptide is Outer-membrane lipoprotein carrier protein (Methylibium petroleiphilum (strain ATCC BAA-1232 / LMG 22953 / PM1)).